The chain runs to 154 residues: Endoribonuclease YbeY (154 aa).

Zn(2+)-binding residues include His118, His122, and His128.

The protein belongs to the endoribonuclease YbeY family. Requires Zn(2+) as cofactor.

It is found in the cytoplasm. In terms of biological role, single strand-specific metallo-endoribonuclease involved in late-stage 70S ribosome quality control and in maturation of the 3' terminus of the 16S rRNA. The polypeptide is Endoribonuclease YbeY (Chloroflexus aurantiacus (strain ATCC 29366 / DSM 635 / J-10-fl)).